The sequence spans 328 residues: UPF0104 membrane protein AF_2231 (328 aa).

Transmembrane regions (helical) follow at residues 31 to 51 (NWLL…LWAL), 116 to 136 (ILDS…TGFS), 139 to 159 (FGFK…YILY), 221 to 241 (LVTL…LVAL), 245 to 265 (AYFL…LVPL), and 277 to 297 (MAYL…VGLW).

This sequence belongs to the UPF0104 family.

It is found in the cell membrane. The sequence is that of UPF0104 membrane protein AF_2231 from Archaeoglobus fulgidus (strain ATCC 49558 / DSM 4304 / JCM 9628 / NBRC 100126 / VC-16).